The sequence spans 115 residues: NADH-ubiquinone oxidoreductase chain 3 (115 aa).

Helical transmembrane passes span 3 to 23 (LMLT…IAFW), 55 to 75 (FFLV…LLPL), and 84 to 104 (LNTM…SLAY).

Belongs to the complex I subunit 3 family. As to quaternary structure, core subunit of respiratory chain NADH dehydrogenase (Complex I) which is composed of 45 different subunits. Interacts with TMEM186. Interacts with TMEM242.

It is found in the mitochondrion inner membrane. It carries out the reaction a ubiquinone + NADH + 5 H(+)(in) = a ubiquinol + NAD(+) + 4 H(+)(out). In terms of biological role, core subunit of the mitochondrial membrane respiratory chain NADH dehydrogenase (Complex I) which catalyzes electron transfer from NADH through the respiratory chain, using ubiquinone as an electron acceptor. Essential for the catalytic activity of complex I. This chain is NADH-ubiquinone oxidoreductase chain 3, found in Equus caballus (Horse).